The primary structure comprises 339 residues: Undecaprenyl-phosphate 4-deoxy-4-formamido-L-arabinose transferase (339 aa).

The next 2 membrane-spanning stretches (helical) occupy residues 235-255 (LSLV…FLLV) and 269-289 (LFVL…GMGL).

It belongs to the glycosyltransferase 2 family.

Its subcellular location is the cell inner membrane. It catalyses the reaction UDP-4-deoxy-4-formamido-beta-L-arabinose + di-trans,octa-cis-undecaprenyl phosphate = 4-deoxy-4-formamido-alpha-L-arabinopyranosyl di-trans,octa-cis-undecaprenyl phosphate + UDP. The protein operates within glycolipid biosynthesis; 4-amino-4-deoxy-alpha-L-arabinose undecaprenyl phosphate biosynthesis; 4-amino-4-deoxy-alpha-L-arabinose undecaprenyl phosphate from UDP-4-deoxy-4-formamido-beta-L-arabinose and undecaprenyl phosphate: step 1/2. It functions in the pathway bacterial outer membrane biogenesis; lipopolysaccharide biosynthesis. Catalyzes the transfer of 4-deoxy-4-formamido-L-arabinose from UDP to undecaprenyl phosphate. The modified arabinose is attached to lipid A and is required for resistance to polymyxin and cationic antimicrobial peptides. This Pseudomonas paraeruginosa (strain DSM 24068 / PA7) (Pseudomonas aeruginosa (strain PA7)) protein is Undecaprenyl-phosphate 4-deoxy-4-formamido-L-arabinose transferase.